Consider the following 271-residue polypeptide: Protein PXR1 (271 aa).

Disordered regions lie at residues 1–26 (MGLA…NNTS) and 149–233 (KKRP…DSAA). Positions 17-26 (RNTTWSNNTS) are enriched in polar residues. Residues 25–71 (TSRFGHKHLEKLGWKPGSGLGLVPDSTTSHIKVSIKDDNLGLGAKLK) enclose the G-patch domain. Positions 165-205 (KKTKKVKKEKKVKKVKKEKKEKKEKKDKKEKKVKKEKKEKK) are enriched in basic residues. Residues 206-230 (EKKLKDKHSKDTNEITRDQMLKPRD) show a composition bias toward basic and acidic residues.

Belongs to the PINX1 family.

Its subcellular location is the nucleus. The protein localises to the nucleolus. Its function is as follows. Involved in rRNA-processing at A0, A1 and A2 sites and negatively regulates telomerase. The polypeptide is Protein PXR1 (PXR1) (Kluyveromyces lactis (strain ATCC 8585 / CBS 2359 / DSM 70799 / NBRC 1267 / NRRL Y-1140 / WM37) (Yeast)).